Reading from the N-terminus, the 384-residue chain is uncharacterized protein (384 aa).

Positions 137 to 303 (EHDAPNRLWQ…VPGSRYQPSA (167 aa)) constitute an Integrase catalytic domain.

This is an uncharacterized protein from Escherichia coli (strain K12).